The chain runs to 188 residues: GTP cyclohydrolase 1 (188 aa).

Cysteine 73, histidine 76, and cysteine 144 together coordinate Zn(2+).

Belongs to the GTP cyclohydrolase I family. In terms of assembly, homomer.

The catalysed reaction is GTP + H2O = 7,8-dihydroneopterin 3'-triphosphate + formate + H(+). The protein operates within cofactor biosynthesis; 7,8-dihydroneopterin triphosphate biosynthesis; 7,8-dihydroneopterin triphosphate from GTP: step 1/1. This Caldivirga maquilingensis (strain ATCC 700844 / DSM 13496 / JCM 10307 / IC-167) protein is GTP cyclohydrolase 1.